A 340-amino-acid chain; its full sequence is MNVFEPRLSSWLENAGDDDDVVLSSRIRLARNLKDEQFPIYEQKEEIVDKIAGAFDDNFTLIKMNQISHLEKALLVEKHLISPYMMNKSEYGAVLLNEEENVSIMLNEEDHLRIQCMTPGLRLFDALEAALQIDGYVEEKLSYAFDKQFGYLTSCVTNIGTGMRASVMVHLPGLVTTKRIKSVIEAIRSLGFVVRGIYGEGSLPASSIFQVSNQVTLGKTETEIVEDLTQVMEQIIMQERIARTTLKQKFHIALEDRVFRSYGLLTNCRIISMREASDAISDVRLGVELGFFEHISRQKMNELVLFSQPAFLRREAGRDMDELEEKVIRAKVIREILGDK.

Residues 21-242 enclose the Phosphagen kinase C-terminal domain; the sequence is VVLSSRIRLA…EQIIMQERIA (222 aa). Residues 24-28, His-79, Arg-113, 164-168, and 195-200 each bind ATP; these read SSRIR, RASVM, and RGIYGE.

Belongs to the ATP:guanido phosphotransferase family.

The enzyme catalyses L-arginyl-[protein] + ATP = N(omega)-phospho-L-arginyl-[protein] + ADP + H(+). Functionally, catalyzes the specific phosphorylation of arginine residues in proteins. In Listeria monocytogenes serotype 4a (strain HCC23), this protein is Protein-arginine kinase.